The chain runs to 74 residues: Progonadoliberin-3 (74 aa).

The signal sequence occupies residues 1-15 (VRVVVLALVAQVTLS). Q16 carries the post-translational modification Pyrrolidone carboxylic acid. A Glycine amide modification is found at G25.

It belongs to the GnRH family.

The protein localises to the secreted. In terms of biological role, stimulates the secretion of gonadotropins. The chain is Progonadoliberin-3 (gnrh3) from Oncorhynchus tshawytscha (Chinook salmon).